The following is a 98-amino-acid chain: UPF0473 protein GTNG_2486 (98 aa).

This sequence belongs to the UPF0473 family.

The protein is UPF0473 protein GTNG_2486 of Geobacillus thermodenitrificans (strain NG80-2).